The primary structure comprises 83 residues: Small ribosomal subunit protein bS16 (83 aa).

Belongs to the bacterial ribosomal protein bS16 family.

The polypeptide is Small ribosomal subunit protein bS16 (Shewanella baltica (strain OS223)).